The primary structure comprises 119 residues: Large ribosomal subunit protein uL24 (119 aa).

This sequence belongs to the universal ribosomal protein uL24 family. Part of the 50S ribosomal subunit.

In terms of biological role, one of two assembly initiator proteins, it binds directly to the 5'-end of the 23S rRNA, where it nucleates assembly of the 50S subunit. One of the proteins that surrounds the polypeptide exit tunnel on the outside of the subunit. This Clavibacter sepedonicus (Clavibacter michiganensis subsp. sepedonicus) protein is Large ribosomal subunit protein uL24.